Here is a 330-residue protein sequence, read N- to C-terminus: D-lactate dehydrogenase (330 aa).

NAD(+)-binding positions include 155-156 (RI), D175, 206-207 (MP), N212, 233-235 (MAR), and D259. R235 is a catalytic residue. Residue E264 is part of the active site. Residue H296 is the Proton donor of the active site.

Belongs to the D-isomer specific 2-hydroxyacid dehydrogenase family.

It carries out the reaction (R)-lactate + NAD(+) = pyruvate + NADH + H(+). In Streptococcus agalactiae serotype V (strain ATCC BAA-611 / 2603 V/R), this protein is D-lactate dehydrogenase (ldhD).